Here is a 462-residue protein sequence, read N- to C-terminus: Proteases secretion protein PrtF (462 aa).

Positions 1–23 (MRRKAVLLTVVLSLSGGSAQAMG) are cleaved as a signal peptide.

The protein belongs to the outer membrane factor (OMF) (TC 1.B.17) family.

It is found in the cell outer membrane. Its function is as follows. Involved in the secretion of proteases A, B, C and G. The protein is Proteases secretion protein PrtF (prtF) of Dickeya chrysanthemi (Pectobacterium chrysanthemi).